Here is a 256-residue protein sequence, read N- to C-terminus: DNA repair protein RecO (256 aa).

This sequence belongs to the RecO family.

In terms of biological role, involved in DNA repair and RecF pathway recombination. This chain is DNA repair protein RecO, found in Streptococcus equi subsp. zooepidemicus (strain MGCS10565).